Reading from the N-terminus, the 22-residue chain is uncharacterized protein (22 aa).

Belongs to the asfivirus C84L family.

This is an uncharacterized protein from Ornithodoros (relapsing fever ticks).